The primary structure comprises 360 residues: Mitogen-activated protein kinase 1 (360 aa).

Alanine 2 bears the N-acetylalanine mark. Residues 25–313 (YTNLSYIGEG…VEQALAHPYL (289 aa)) enclose the Protein kinase domain. Position 29 is a phosphoserine; by SGK1 (serine 29). ATP contacts are provided by residues 31–39 (IGEGAYGMV) and lysine 54. The active-site Proton acceptor is aspartate 149. At threonine 185 the chain carries Phosphothreonine; by MAP2K1 and MAP2K2. A TXY motif is present at residues 185-187 (TEY). Position 187 is a phosphotyrosine; by MAP2K1 and MAP2K2 (tyrosine 187). Threonine 190 bears the Phosphothreonine; by autocatalysis mark. Phosphoserine occurs at positions 246 and 248. Residues 259-277 (KARNYLLSLPHKNKVPWNR) mediate DNA binding. At serine 284 the chain carries Phosphoserine. A Cytoplasmic retention motif motif is present at residues 318-322 (DPSDE). Positions 327 to 333 (APFKFDM) match the Nuclear translocation motif motif.

This sequence belongs to the protein kinase superfamily. CMGC Ser/Thr protein kinase family. MAP kinase subfamily. As to quaternary structure, binds both upstream activators and downstream substrates in multimolecular complexes. This interaction inhibits its tyrosine-kinase activity. Interacts with ADAM15, ARHGEF2, ARRB2, DAPK1 (via death domain), HSF4, IER3, IPO7, NISCH, SGK1, and isoform 1 of NEK2. Interacts (via phosphorylated form) with TPR (via C-terminal region and phosphorylated form); the interaction requires dimerization of MAPK1/ERK2 and increases following EGF stimulation. Interacts with MAP2K1. Interacts with DUSP6. Interacts (phosphorylated form) with CAV2 ('Tyr-19'-phosphorylated form); the interaction, promoted by insulin, leads to nuclear location and MAPK1 activation. Interacts with MORG1, PEA15 and MKNK2. MKNK2 isoform 1 binding prevents from dephosphorylation and inactivation. Interacts with DCC. The phosphorylated form interacts with PML (isoform PML-4). Interacts with STYX. Interacts with CDK2AP2. Interacts with CAVIN4. Interacts with DUSP7; the interaction enhances DUSP7 phosphatase activity. Interacts with GIT1; this interaction is necessary for MAPK1 localization to focal adhesions. Interacts with ZNF263. Interacts with phosphoglycerate kinase PGK1; the interaction is direct, occurs under hypoxic conditions, and promotes interaction between PGK1 and PIN1. In terms of assembly, (Microbial infection) Interacts with HIV-1 Nef through its SH3 domain. The cofactor is Mg(2+). Post-translationally, phosphorylated upon KIT and FLT3 signaling. Dually phosphorylated on Thr-185 and Tyr-187, which activates the enzyme. Undergoes regulatory phosphorylation on additional residues such as Ser-246 and Ser-248 in the kinase insert domain (KID) These phosphorylations, which are probably mediated by more than one kinase, are important for binding of MAPK1/ERK2 to importin-7 (IPO7) and its nuclear translocation. In addition, autophosphorylation of Thr-190 was shown to affect the subcellular localization of MAPK1/ERK2 as well. Ligand-activated ALK induces tyrosine phosphorylation. Dephosphorylated by PTPRJ at Tyr-187. Phosphorylation on Ser-29 by SGK1 results in its activation by enhancing its interaction with MAP2K1/MEK1 and MAP2K2/MEK2. DUSP3 and DUSP6 dephosphorylate specifically MAPK1/ERK2 and MAPK3/ERK1 whereas DUSP9 dephosphorylates a broader range of MAPKs. Dephosphorylated by DUSP1 and DUSP2 at Thr-185 and Tyr-187. ISGylated. In terms of processing, ubiquitinated by TRIM15 via 'Lys-63'-linked ubiquitination; leading to activation. Deubiquitinated by CYLD.

It localises to the cytoplasm. The protein resides in the cytoskeleton. The protein localises to the spindle. Its subcellular location is the nucleus. It is found in the microtubule organizing center. It localises to the centrosome. The protein resides in the membrane. The protein localises to the caveola. Its subcellular location is the cell junction. It is found in the focal adhesion. It catalyses the reaction L-seryl-[protein] + ATP = O-phospho-L-seryl-[protein] + ADP + H(+). The catalysed reaction is L-threonyl-[protein] + ATP = O-phospho-L-threonyl-[protein] + ADP + H(+). Phosphorylated by MAP2K1/MEK1 and MAP2K2/MEK2 on Thr-185 and Tyr-187 in response to external stimuli like insulin or NGF. Both phosphorylations are required for activity. This phosphorylation causes dramatic conformational changes, which enable full activation and interaction of MAPK1/ERK2 with its substrates. Phosphorylation on Ser-29 by SGK1 results in its activation by enhancing its interaction with MAP2K1/MEK1 and MAP2K2/MEK2. Dephosphorylated and inactivated by DUSP1, DUSP3, DUSP6 and DUSP9. Inactivated by pyrimidylpyrrole inhibitors. In terms of biological role, serine/threonine kinase which acts as an essential component of the MAP kinase signal transduction pathway. MAPK1/ERK2 and MAPK3/ERK1 are the 2 MAPKs which play an important role in the MAPK/ERK cascade. They participate also in a signaling cascade initiated by activated KIT and KITLG/SCF. Depending on the cellular context, the MAPK/ERK cascade mediates diverse biological functions such as cell growth, adhesion, survival and differentiation through the regulation of transcription, translation, cytoskeletal rearrangements. The MAPK/ERK cascade also plays a role in initiation and regulation of meiosis, mitosis, and postmitotic functions in differentiated cells by phosphorylating a number of transcription factors. About 160 substrates have already been discovered for ERKs. Many of these substrates are localized in the nucleus, and seem to participate in the regulation of transcription upon stimulation. However, other substrates are found in the cytosol as well as in other cellular organelles, and those are responsible for processes such as translation, mitosis and apoptosis. Moreover, the MAPK/ERK cascade is also involved in the regulation of the endosomal dynamics, including lysosome processing and endosome cycling through the perinuclear recycling compartment (PNRC); as well as in the fragmentation of the Golgi apparatus during mitosis. The substrates include transcription factors (such as ATF2, BCL6, ELK1, ERF, FOS, HSF4 or SPZ1), cytoskeletal elements (such as CANX, CTTN, GJA1, MAP2, MAPT, PXN, SORBS3 or STMN1), regulators of apoptosis (such as BAD, BTG2, CASP9, DAPK1, IER3, MCL1 or PPARG), regulators of translation (such as EIF4EBP1 and FXR1) and a variety of other signaling-related molecules (like ARHGEF2, DCC, FRS2 or GRB10). Protein kinases (such as RAF1, RPS6KA1/RSK1, RPS6KA3/RSK2, RPS6KA2/RSK3, RPS6KA6/RSK4, SYK, MKNK1/MNK1, MKNK2/MNK2, RPS6KA5/MSK1, RPS6KA4/MSK2, MAPKAPK3 or MAPKAPK5) and phosphatases (such as DUSP1, DUSP4, DUSP6 or DUSP16) are other substrates which enable the propagation the MAPK/ERK signal to additional cytosolic and nuclear targets, thereby extending the specificity of the cascade. Mediates phosphorylation of TPR in response to EGF stimulation. May play a role in the spindle assembly checkpoint. Phosphorylates PML and promotes its interaction with PIN1, leading to PML degradation. Phosphorylates CDK2AP2. Phosphorylates phosphoglycerate kinase PGK1 under hypoxic conditions to promote its targeting to the mitochondrion and suppress the formation of acetyl-coenzyme A from pyruvate. Its function is as follows. Acts as a transcriptional repressor. Binds to a [GC]AAA[GC] consensus sequence. Repress the expression of interferon gamma-induced genes. Seems to bind to the promoter of CCL5, DMP1, IFIH1, IFITM1, IRF7, IRF9, LAMP3, OAS1, OAS2, OAS3 and STAT1. Transcriptional activity is independent of kinase activity. This chain is Mitogen-activated protein kinase 1, found in Homo sapiens (Human).